The chain runs to 301 residues: Acetylglutamate kinase (301 aa).

Residues 68 to 69 (GG), Arg-90, and Asn-195 contribute to the substrate site.

The protein belongs to the acetylglutamate kinase family. ArgB subfamily.

Its subcellular location is the cytoplasm. It catalyses the reaction N-acetyl-L-glutamate + ATP = N-acetyl-L-glutamyl 5-phosphate + ADP. Its pathway is amino-acid biosynthesis; L-arginine biosynthesis; N(2)-acetyl-L-ornithine from L-glutamate: step 2/4. Its function is as follows. Catalyzes the ATP-dependent phosphorylation of N-acetyl-L-glutamate. This chain is Acetylglutamate kinase, found in Pseudomonas fluorescens (strain Pf0-1).